A 213-amino-acid chain; its full sequence is Nicolin-1 (213 aa).

Part of the neuronal tubulin polyglutamylase complex which contains TPGS1, TPGS2, TTLL1, LRRC49 and NICN1.

The protein localises to the nucleus. In Canis lupus familiaris (Dog), this protein is Nicolin-1 (NICN1).